We begin with the raw amino-acid sequence, 175 residues long: Di-N-acetylchitobiase (175 aa).

The first 38 residues, 1-38 (MARLQLAGSRRLVPLPRRAPRLAPLLLPLLLALPDGAR), serve as a signal peptide directing secretion. Positions 39–175 (ADCPCKVPAL…SFHHEIKGSQ (137 aa)) constitute a GH18 domain. N-linked (GlcNAc...) asparagine glycosylation is present at Asn-115. Glu-143 serves as the catalytic Proton donor.

Belongs to the glycosyl hydrolase 18 family.

The protein localises to the lysosome. Functionally, involved in the degradation of asparagine-linked glycoproteins. Hydrolyze of N-acetyl-beta-D-glucosamine (1-4)N-acetylglucosamine chitobiose core from the reducing end of the bond, it requires prior cleavage by glycosylasparaginase. This chain is Di-N-acetylchitobiase (CTBS), found in Bos taurus (Bovine).